The primary structure comprises 64 residues: Large ribosomal subunit protein uL29 (64 aa).

It belongs to the universal ribosomal protein uL29 family.

This chain is Large ribosomal subunit protein uL29, found in Paraburkholderia phytofirmans (strain DSM 17436 / LMG 22146 / PsJN) (Burkholderia phytofirmans).